The following is a 233-amino-acid chain: MQMLDRLESEILADRVSEESRRWLASCGLTVEQMKNQMDPVYTPARKIHLYHCDHRGLPLALISTEGATAWCAEYDEWGNLLSDENPHHLQQLIRLPGQQYDEESGLYYNRHRYYDPLLGRYITQDPIGLKGGWNFYQYPLNPVINVDPQGLVDINLYPESDLIHSVADEINIPGVFTIGGHGTPTSIESATRSIMTAKDLAYLIKFDGNYKDGMTVWLFSCNTGKGQNSFAS.

The protein belongs to the RHS family.

This is an uncharacterized protein from Escherichia coli (strain K12).